A 176-amino-acid chain; its full sequence is Ribonuclease mitogillin (176 aa).

The signal sequence occupies residues 1–27 (MVAIKNLFLLAATAVSVLAAPSPLDAR). 2 cysteine pairs are disulfide-bonded: C32-C174 and C102-C158. H76 is an active-site residue. The Proton acceptor role is filled by E122. The active-site Proton donor is H163.

It belongs to the ribonuclease U2 family.

It is found in the secreted. In terms of biological role, this purine-specific ribonuclease cleaves 28S RNA in eukaryotic ribosomes, inhibits protein synthesis, and shows antitumor activity. This chain is Ribonuclease mitogillin (mitF), found in Aspergillus fumigatus (strain ATCC MYA-4609 / CBS 101355 / FGSC A1100 / Af293) (Neosartorya fumigata).